The sequence spans 766 residues: Phospholipid phosphatase-related protein type 4 (766 aa).

The residue at position 37 (Ser37) is a Phosphoserine. 4 helical membrane passes run 68 to 88 (LPCFYFVELPILASSVVSLYF), 120 to 140 (AIPFLMLLSLAFAGPAITIMV), 179 to 199 (FVGVHVVGLCSTALITDIIQL), and 248 to 268 (SFPSQHATLAAFAAVYVSMYF). Asn269 is a glycosylation site (N-linked (GlcNAc...) asparagine). Helical transmembrane passes span 277–297 (KLLKPLLVFTFIICGIICGLT) and 309–329 (VYCGFLIGGGIALYLGLYAVG). Position 347 is a phosphoserine (Ser347). The N-linked (GlcNAc...) asparagine glycan is linked to Asn363. Ser386 is modified (phosphoserine). N-linked (GlcNAc...) asparagine glycosylation occurs at Asn433. A Phosphoserine modification is found at Ser439. Disordered regions lie at residues 454–503 (SKNE…GNQY) and 510–529 (TVPGCNNSMPAGPRVSIQSR). The N-linked (GlcNAc...) asparagine glycan is linked to Asn456. A phosphoserine mark is found at Ser462 and Ser474. Asn515 and Asn545 each carry an N-linked (GlcNAc...) asparagine glycan. Ser608 carries the phosphoserine modification. Disordered stretches follow at residues 634 to 654 (PIIQIPSSTEGEGSGSWKWKA), 672 to 705 (DSESCESLKDSFGSGDRKRKHIDSNEHHHHGITT), and 741 to 766 (PERSNSPENTRNIFYKGTSPTRPYKD). Residues 688–702 (RKRKHIDSNEHHHHG) show a composition bias toward basic residues. Residues 743–752 (RSNSPENTRN) are compositionally biased toward polar residues.

This sequence belongs to the PA-phosphatase related phosphoesterase family. O-glycosylated. Probably at Ser-347. In terms of tissue distribution, specifically expressed in neurons (at protein level).

The protein localises to the postsynaptic density membrane. Its function is as follows. Postsynaptic density membrane protein that indirectly regulates glutamatergic synaptic transmission through lysophosphatidic acid (LPA)-mediated signaling pathways. Binds lysophosphatidic acid (LPA) and mediates its internalization into cells. Could act as receptor or a transporter of this lipid at the post-synaptic membrane. Modulates lysophosphatidic acid (LPA) activity in neuron axonal outgrowth during development by attenuating phospholipid-induced axon collapse. The sequence is that of Phospholipid phosphatase-related protein type 4 from Rattus norvegicus (Rat).